Reading from the N-terminus, the 326-residue chain is HTH-type transcriptional regulator SyrM (326 aa).

An HTH lysR-type domain is found at 32-89 (IDLNLLVDLEALLQYRHITQAAQHVGRSQPAMSRALSRLRGMLKDDLLVAGSRGLVLT). The H-T-H motif DNA-binding region spans 49–68 (ITQAAQHVGRSQPAMSRALS).

Belongs to the LysR transcriptional regulatory family.

Its function is as follows. Acts in trans to stimulate nod gene expression via nodD3 and exo gene expression via SyrA. The polypeptide is HTH-type transcriptional regulator SyrM (syrM) (Rhizobium meliloti (strain 1021) (Ensifer meliloti)).